A 47-amino-acid polypeptide reads, in one-letter code: Gene 60 protein (47 aa).

This chain is Gene 60 protein (60), found in Mycobacterium phage L5 (Mycobacteriophage L5).